A 1252-amino-acid chain; its full sequence is DNA-directed RNA polymerase subunit beta (1252 aa).

It belongs to the RNA polymerase beta chain family. As to quaternary structure, the RNAP catalytic core consists of 2 alpha, 1 beta, 1 beta' and 1 omega subunit. When a sigma factor is associated with the core the holoenzyme is formed, which can initiate transcription.

The catalysed reaction is RNA(n) + a ribonucleoside 5'-triphosphate = RNA(n+1) + diphosphate. DNA-dependent RNA polymerase catalyzes the transcription of DNA into RNA using the four ribonucleoside triphosphates as substrates. This Chlamydia felis (strain Fe/C-56) (Chlamydophila felis) protein is DNA-directed RNA polymerase subunit beta.